A 289-amino-acid chain; its full sequence is Proteasome assembly chaperone 1 (289 aa).

Positions 1–38 are disordered; that stretch reads MAATFFGEVVKAPCRAGTEEEEEEEEQSRRDTPEDREV. Position 2 is an N-acetylalanine (Ala2). Thr18 is modified (phosphothreonine). Over residues 27–38 the composition is skewed to basic and acidic residues; it reads QSRRDTPEDREV. Thr55 is modified (phosphothreonine). Ser181 carries the post-translational modification Phosphoserine. At Lys265 the chain carries N6-acetyllysine.

This sequence belongs to the PSMG1 family. In terms of assembly, forms a heterodimer with PSMG2. The PSMG1-PSMG2 heterodimer interacts directly with the PSMA5 and PSMA7 proteasome alpha subunits. Post-translationally, degraded by the proteasome upon completion of 20S proteasome maturation. In terms of tissue distribution, highly expressed in testis with moderate expression in brain, liver and kidney and low levels in heart, skeletal muscle and pancreas.

It is found in the cytoplasm. Its subcellular location is the endoplasmic reticulum. Chaperone protein which promotes assembly of the 20S proteasome as part of a heterodimer with PSMG2. The PSMG1-PSMG2 heterodimer binds to the PSMA5 and PSMA7 proteasome subunits, promotes assembly of the proteasome alpha subunits into the heteroheptameric alpha ring and prevents alpha ring dimerization. This Mus musculus (Mouse) protein is Proteasome assembly chaperone 1.